A 180-amino-acid polypeptide reads, in one-letter code: Bifunctional protein PyrR (180 aa).

The short motif at 101–113 is the PRPP-binding element; sequence VILVDDVLYTGRT.

The protein belongs to the purine/pyrimidine phosphoribosyltransferase family. PyrR subfamily. As to quaternary structure, homodimer and homohexamer; in equilibrium.

The enzyme catalyses UMP + diphosphate = 5-phospho-alpha-D-ribose 1-diphosphate + uracil. Functionally, regulates transcriptional attenuation of the pyrimidine nucleotide (pyr) operon by binding in a uridine-dependent manner to specific sites on pyr mRNA. This disrupts an antiterminator hairpin in the RNA and favors formation of a downstream transcription terminator, leading to a reduced expression of downstream genes. Its function is as follows. Also displays a weak uracil phosphoribosyltransferase activity which is not physiologically significant. This is Bifunctional protein PyrR from Bacillus cytotoxicus (strain DSM 22905 / CIP 110041 / 391-98 / NVH 391-98).